The chain runs to 418 residues: uncharacterized protein (418 aa).

Transmembrane regions (helical) follow at residues 51 to 71, 79 to 99, 110 to 130, 163 to 183, 224 to 244, 258 to 278, 289 to 309, 315 to 335, 356 to 376, and 379 to 399; these read FVMAVGGIAAIVAQTPIGALV, ALVVAGAVLVTAAAVAMPLFA, VTGIASSVFAPALAAITLGAV, FFGPVVVFWVLAGMALISVLA, VIFGAAVVAFHFANAAMLPLV, ALMSSCIVAAQVVMVPVAYVV, PIFLVGFAVLTARGFLYTLSD, VGVQLLDGIGAGIFGALFPLV, ATGIGAALSNLVAGWIVVVAG, and AAFMSLGALAGAGFLLYLVAM.

It belongs to the major facilitator superfamily.

It localises to the cell membrane. This is an uncharacterized protein from Mycobacterium tuberculosis (strain CDC 1551 / Oshkosh).